Here is a 319-residue protein sequence, read N- to C-terminus: MNFNINILGTGGTRPLHNRYLTSVLIEYHGESILFDCGEATQMSLRKQKISWQKIKMICITHLHADHITGLLGIVMLMAQSGDTRKEPLTIIGPIGIKKYLETNIELLRVHKNYQIIYKEIIINKTEPVLYEDKRKRIEYIKLKHSIDCIGYLFIEKDKPGKFDIQKAESLNIPKGPIRKKLQEGYEVMLNGRKIVPSEILGETKKGLKFAYITDTAYFEELSTYIQNFNLVIIESTFKDDLKEEAKKKLHLTAKLAAQITKKAKVYQTGLIHFSERYTLNKDLYELLNEAQQEYPNGNIFLAKDGMKLKANKDKFIIK.

H62, H64, D66, H67, H145, D215, and H273 together coordinate Zn(2+). The active-site Proton acceptor is D66.

Belongs to the RNase Z family. In terms of assembly, homodimer. Zn(2+) is required as a cofactor.

The enzyme catalyses Endonucleolytic cleavage of RNA, removing extra 3' nucleotides from tRNA precursor, generating 3' termini of tRNAs. A 3'-hydroxy group is left at the tRNA terminus and a 5'-phosphoryl group is left at the trailer molecule.. Zinc phosphodiesterase, which displays some tRNA 3'-processing endonuclease activity. Probably involved in tRNA maturation, by removing a 3'-trailer from precursor tRNA. This is Ribonuclease Z from Borrelia duttonii (strain Ly).